A 161-amino-acid polypeptide reads, in one-letter code: Phosphopantetheine adenylyltransferase (161 aa).

Serine 10 is a binding site for substrate. Residues 10–11 (SF) and histidine 18 each bind ATP. Substrate-binding residues include lysine 42, alanine 75, and arginine 89. ATP is bound by residues 90–92 (GLR), glutamate 100, and 125–131 (LSPISSS).

Belongs to the bacterial CoaD family. As to quaternary structure, homohexamer. The cofactor is Mg(2+).

It is found in the cytoplasm. It carries out the reaction (R)-4'-phosphopantetheine + ATP + H(+) = 3'-dephospho-CoA + diphosphate. Its pathway is cofactor biosynthesis; coenzyme A biosynthesis; CoA from (R)-pantothenate: step 4/5. Functionally, reversibly transfers an adenylyl group from ATP to 4'-phosphopantetheine, yielding dephospho-CoA (dPCoA) and pyrophosphate. This chain is Phosphopantetheine adenylyltransferase, found in Streptococcus agalactiae serotype III (strain NEM316).